Consider the following 369-residue polypeptide: ERCC4 domain-containing protein EP364R (369 aa).

Positions 3–101 (FLVADHREHH…QLYFFVEGPA (99 aa)) constitute an ERCC4 domain. A disordered region spans residues 339–369 (PLHDVSDDASSDASSPTGHQTLSKEMSLNTA). Positions 354–369 (PTGHQTLSKEMSLNTA) are enriched in polar residues.

This sequence belongs to the asfivirus EP364R family.

Plays a role in the inhibition of type I interferon signaling pathway. Mechanistically, specifically interacts with 2',3'-cGAMP and cleaves it via its phosphodiesterase activity. In turn, prevents 2',3'-cGAMP interaction with host ER-resident STING1 leading to inhibition of downstream signaling pathway and type I interferon production. The protein is ERCC4 domain-containing protein EP364R of African swine fever virus (isolate Tick/South Africa/Pretoriuskop Pr4/1996) (ASFV).